The primary structure comprises 655 residues: Broad substrate specificity ATP-binding cassette transporter ABCG2 (655 aa).

Topologically, residues 1-395 (MSSNSYEVSI…KNLLGNPQAS (395 aa)) are cytoplasmic. An ABC transporter domain is found at 36 to 285 (LSFHNICYRV…FGAIGFRCEP (250 aa)). ATP contacts are provided by residues 79-86 (GPTGGGKS), 183-189 (RGVSGGE), Glu-210, and His-242. Positions 389–651 (LGNPQASIAQ…TIAYLKLLFL (263 aa)) constitute an ABC transmembrane type-2 domain. The chain crosses the membrane as a helical span at residues 396–416 (IAQLIVTVFLGLVIGAIFYDL). The Extracellular segment spans residues 417–428 (KNDPAGIQNRAG). The helical transmembrane segment at 429-449 (VLFFLTTNQCFSSVSAVELLV) threads the bilayer. Residues 450–477 (VEKKLFIHEYISGYYRVSSYFFGKLLSD) are Cytoplasmic-facing. A helical transmembrane segment spans residues 478 to 498 (LLPMRMLPSIIFTCITYFLLG). The Extracellular segment spans residues 499 to 506 (LKPKVEAF). The chain crosses the membrane as a helical span at residues 507–527 (FIMMLTLMMVAYSASSMALAI). Residues 528–535 (AAGQSVVS) lie on the Cytoplasmic side of the membrane. Residues 536-556 (IATLLMTISFVFMMIFSGLLV) form a helical membrane-spanning segment. The Extracellular segment spans residues 557-630 (NLKTVVPWLS…ISPWGLWKNH (74 aa)). Residues Cys-592 and Cys-608 are joined by a disulfide bond. Residues Asn-596 and Asn-600 are each glycosylated (N-linked (GlcNAc...) asparagine). The helical transmembrane segment at 631 to 651 (VALACMIVIFLTIAYLKLLFL) threads the bilayer. The Cytoplasmic portion of the chain corresponds to 652 to 655 (KKFS).

This sequence belongs to the ABC transporter superfamily. ABCG family. Eye pigment precursor importer (TC 3.A.1.204) subfamily. In terms of assembly, homodimer; disulfide-linked. The minimal functional unit is a homodimer, but the major oligomeric form in plasma membrane is a homotetramer with possibility of higher order oligomerization up to homododecamers. Post-translationally, N-glycosylated. Glycosylation-deficient ABCG2 is normally expressed and functional. Phosphorylated. Phosphorylation may regulate the localization to the plasma membrane, the homooligomerization and therefore, the activity of the transporter.

The protein localises to the cell membrane. It is found in the apical cell membrane. The protein resides in the mitochondrion membrane. The enzyme catalyses ATP + H2O + xenobioticSide 1 = ADP + phosphate + xenobioticSide 2.. It carries out the reaction urate(in) + ATP + H2O = urate(out) + ADP + phosphate + H(+). The catalysed reaction is indoxyl sulfate(in) + ATP + H2O = indoxyl sulfate(out) + ADP + phosphate + H(+). It catalyses the reaction sphing-4-enine 1-phosphate(in) + ATP + H2O = sphing-4-enine 1-phosphate(out) + ADP + phosphate + H(+). The enzyme catalyses estrone 3-sulfate(in) + ATP + H2O = estrone 3-sulfate(out) + ADP + phosphate + H(+). It carries out the reaction dehydroepiandrosterone 3-sulfate(in) + ATP + H2O = dehydroepiandrosterone 3-sulfate(out) + ADP + phosphate + H(+). The catalysed reaction is 4-methylumbelliferone sulfate(in) + ATP + H2O = 4-methylumbelliferone sulfate(out) + ADP + phosphate + H(+). It catalyses the reaction 5,7-dimethyl-2-methylamino-4-(3-pyridylmethyl)-1,3-benzothiazol-6-yl beta-D-glucuronate(in) + ATP + H2O = 5,7-dimethyl-2-methylamino-4-(3-pyridylmethyl)-1,3-benzothiazol-6-yl beta-D-glucuronate(out) + ADP + phosphate + H(+). The enzyme catalyses 4-methylumbelliferone beta-D-glucuronate(in) + ATP + H2O = 4-methylumbelliferone beta-D-glucuronate(out) + ADP + phosphate + H(+). It carries out the reaction 5,7-dimethyl-2-methylamino-4-(3-pyridylmethyl)-1,3-benzothiazol-6-yl sulfate(in) + ATP + H2O = 5,7-dimethyl-2-methylamino-4-(3-pyridylmethyl)-1,3-benzothiazol-6-yl sulfate(out) + ADP + phosphate + H(+). The catalysed reaction is 17beta-estradiol 17-O-(beta-D-glucuronate)(in) + ATP + H2O = 17beta-estradiol 17-O-(beta-D-glucuronate)(out) + ADP + phosphate + H(+). It catalyses the reaction methotrexate(in) + ATP + H2O = methotrexate(out) + ADP + phosphate + H(+). The enzyme catalyses riboflavin(in) + ATP + H2O = riboflavin(out) + ADP + phosphate + H(+). It carries out the reaction pheophorbide a(in) + ATP + H2O = pheophorbide a(out) + ADP + phosphate + H(+). The catalysed reaction is itaconate(in) + ATP + H2O = itaconate(out) + ADP + phosphate + H(+). Its function is as follows. Broad substrate specificity ATP-dependent transporter of the ATP-binding cassette (ABC) family that actively extrudes a wide variety of physiological compounds, dietary toxins and xenobiotics from cells. Involved in porphyrin homeostasis, mediating the export of protoporphyrin IX (PPIX) from both mitochondria to cytosol and cytosol to extracellular space, it also functions in the cellular export of heme. Also mediates the efflux of sphingosine-1-P from cells. Acts as a urate exporter functioning in both renal and extrarenal urate excretion. In kidney, it also functions as a physiological exporter of the uremic toxin indoxyl sulfate. Also involved in the excretion of steroids like estrone 3-sulfate/E1S, 3beta-sulfooxy-androst-5-en-17-one/DHEAS, and other sulfate conjugates. Mediates the secretion of the riboflavin and biotin vitamins into milk. Extrudes pheophorbide a, a phototoxic porphyrin catabolite of chlorophyll, reducing its bioavailability. Plays an important role in the exclusion of xenobiotics from the brain. It confers to cells a resistance to multiple drugs and other xenobiotics including mitoxantrone, pheophorbide, camptothecin, methotrexate, azidothymidine, and the anthracyclines daunorubicin and doxorubicin, through the control of their efflux. In placenta, it limits the penetration of drugs from the maternal plasma into the fetus. May play a role in early stem cell self-renewal by blocking differentiation. In inflammatory macrophages, exports itaconate from the cytosol to the extracellular compartment and limits the activation of TFEB-dependent lysosome biogenesis involved in antibacterial innate immune response. In Bos taurus (Bovine), this protein is Broad substrate specificity ATP-binding cassette transporter ABCG2 (ABCG2).